Consider the following 760-residue polypeptide: Xaa-Pro dipeptidyl-peptidase (760 aa).

Catalysis depends on charge relay system residues S349, D469, and H499.

The protein belongs to the peptidase S15 family. Homodimer.

Its subcellular location is the cytoplasm. The catalysed reaction is Hydrolyzes Xaa-Pro-|- bonds to release unblocked, N-terminal dipeptides from substrates including Ala-Pro-|-p-nitroanilide and (sequentially) Tyr-Pro-|-Phe-Pro-|-Gly-Pro-|-Ile.. Removes N-terminal dipeptides sequentially from polypeptides having unsubstituted N-termini provided that the penultimate residue is proline. The sequence is that of Xaa-Pro dipeptidyl-peptidase from Streptococcus pyogenes serotype M49 (strain NZ131).